We begin with the raw amino-acid sequence, 1317 residues long: DNA-directed RNA polymerase subunit beta' (1317 aa).

Residues cysteine 60, cysteine 62, cysteine 75, and cysteine 78 each coordinate Zn(2+). The disordered stretch occupies residues 183 to 209; it reads ELEDEGAKSDVKRKVRDGGEREMRQLR. Mg(2+) is bound by residues aspartate 535, aspartate 537, and aspartate 539. Zn(2+) contacts are provided by cysteine 890, cysteine 967, cysteine 974, and cysteine 977.

This sequence belongs to the RNA polymerase beta' chain family. In terms of assembly, the RNAP catalytic core consists of 2 alpha, 1 beta, 1 beta' and 1 omega subunit. When a sigma factor is associated with the core the holoenzyme is formed, which can initiate transcription. Requires Mg(2+) as cofactor. It depends on Zn(2+) as a cofactor.

The enzyme catalyses RNA(n) + a ribonucleoside 5'-triphosphate = RNA(n+1) + diphosphate. Functionally, DNA-dependent RNA polymerase catalyzes the transcription of DNA into RNA using the four ribonucleoside triphosphates as substrates. The chain is DNA-directed RNA polymerase subunit beta' from Mycolicibacterium vanbaalenii (strain DSM 7251 / JCM 13017 / BCRC 16820 / KCTC 9966 / NRRL B-24157 / PYR-1) (Mycobacterium vanbaalenii).